A 72-amino-acid polypeptide reads, in one-letter code: Translation initiation factor IF-1 (72 aa).

Positions 2–72 (AKDDVIEVEG…TRGRITYRYK (71 aa)) constitute an S1-like domain. The residue at position 60 (tyrosine 60) is a Phosphotyrosine.

It belongs to the IF-1 family. In terms of assembly, component of the 30S ribosomal translation pre-initiation complex which assembles on the 30S ribosome in the order IF-2 and IF-3, IF-1 and N-formylmethionyl-tRNA(fMet); mRNA recruitment can occur at any time during PIC assembly.

It localises to the cytoplasm. Its function is as follows. One of the essential components for the initiation of protein synthesis. Stabilizes the binding of IF-2 and IF-3 on the 30S subunit to which N-formylmethionyl-tRNA(fMet) subsequently binds. Helps modulate mRNA selection, yielding the 30S pre-initiation complex (PIC). Upon addition of the 50S ribosomal subunit IF-1, IF-2 and IF-3 are released leaving the mature 70S translation initiation complex. The polypeptide is Translation initiation factor IF-1 (Bacillus subtilis (strain 168)).